Consider the following 439-residue polypeptide: Xylose isomerase (439 aa).

Residues His101 and Asp104 contribute to the active site. Positions 232, 268, 271, 296, 307, 309, and 339 each coordinate Mg(2+).

This sequence belongs to the xylose isomerase family. In terms of assembly, homotetramer. Mg(2+) serves as cofactor.

It localises to the cytoplasm. It carries out the reaction alpha-D-xylose = alpha-D-xylulofuranose. The protein is Xylose isomerase of Pectobacterium atrosepticum (strain SCRI 1043 / ATCC BAA-672) (Erwinia carotovora subsp. atroseptica).